A 311-amino-acid polypeptide reads, in one-letter code: Phosphopantothenate--cysteine ligase (311 aa).

A2 bears the N-acetylalanine mark.

The protein belongs to the PPC synthetase family. Homodimer.

The enzyme catalyses (R)-4'-phosphopantothenate + L-cysteine + ATP = N-[(R)-4-phosphopantothenoyl]-L-cysteine + AMP + diphosphate + H(+). It carries out the reaction (R)-4'-phosphopantothenate + L-cysteine + CTP = N-[(R)-4-phosphopantothenoyl]-L-cysteine + CMP + diphosphate + H(+). The protein operates within cofactor biosynthesis; coenzyme A biosynthesis; CoA from (R)-pantothenate: step 2/5. In terms of biological role, catalyzes the second step in the biosynthesis of coenzyme A from vitamin B5, where cysteine is conjugated to 4'-phosphopantothenate to form 4-phosphopantothenoylcysteine. Has a preference for ATP over CTP as a cosubstrate. This is Phosphopantothenate--cysteine ligase (Ppcs) from Mus musculus (Mouse).